Reading from the N-terminus, the 359-residue chain is Phospho-N-acetylmuramoyl-pentapeptide-transferase (359 aa).

Transmembrane regions (helical) follow at residues 3 to 23 (QILFAAGIALAVSILLTPVLI), 53 to 73 (GGVAILAGLWAGYWGSHLIGI), 84 to 104 (GLLVLGLTTALGGVGFLDDFI), 117 to 137 (TAKLVGQLIAAVAFGILALQF), 156 to 176 (IATVTMGSVVFVAFCYLLVSA), 187 to 207 (LDGLAAGSMSLVLGAYVIITF), 231 to 251 (LALICAAGAGACIGFLWWNAA), 255 to 275 (IFMGDTGSLALGGMLAGLSIT), 283 to 303 (VVIGALFVAEAASVVIQVAVF), and 330 to 350 (VIIRFWLLAAIASAIGLALFY).

This sequence belongs to the glycosyltransferase 4 family. MraY subfamily. Mg(2+) serves as cofactor.

It localises to the cell membrane. The enzyme catalyses UDP-N-acetyl-alpha-D-muramoyl-L-alanyl-gamma-D-glutamyl-meso-2,6-diaminopimeloyl-D-alanyl-D-alanine + di-trans,octa-cis-undecaprenyl phosphate = di-trans,octa-cis-undecaprenyl diphospho-N-acetyl-alpha-D-muramoyl-L-alanyl-D-glutamyl-meso-2,6-diaminopimeloyl-D-alanyl-D-alanine + UMP. Its pathway is cell wall biogenesis; peptidoglycan biosynthesis. In terms of biological role, catalyzes the initial step of the lipid cycle reactions in the biosynthesis of the cell wall peptidoglycan: transfers peptidoglycan precursor phospho-MurNAc-pentapeptide from UDP-MurNAc-pentapeptide onto the lipid carrier undecaprenyl phosphate, yielding undecaprenyl-pyrophosphoryl-MurNAc-pentapeptide, known as lipid I. This chain is Phospho-N-acetylmuramoyl-pentapeptide-transferase, found in Rhodococcus jostii (strain RHA1).